A 201-amino-acid chain; its full sequence is MNPGYDCLFKLLLIGDSGVGKSCLLLRFADDPYTESYISTIGVDFKIQTIELDGKTIKLQIWDTAGQERFWTITSSYYRGAHGFLVVYDVTDQESYANVKQWLQEIDRHASENVNKLLVGNKSDLTTKKVVDNTTAKEFADSLGIPFLETSAKNATNVEQAFMTMAAEIKKQMGPGAASGGERPNLKIDSTPVKPAGGGCC.

GTP contacts are provided by residues 15–23 (GDSGVGKSC), 33–40 (YTESYIST), and 63–67 (DTAGQ). The Effector region signature appears at 37 to 45 (YISTIGVDF). A (Microbial infection) O-(2-cholinephosphoryl)serine modification is found at serine 76. GTP contacts are provided by residues 121–124 (NKSD) and 151–153 (SAK). The interval 174–201 (GPGAASGGERPNLKIDSTPVKPAGGGCC) is disordered. Residues cysteine 200 and cysteine 201 are each lipidated (S-geranylgeranyl cysteine).

It belongs to the small GTPase superfamily. Rab family. Post-translationally, (Microbial infection) Phosphocholinated at Ser-76 by L.pneumophila AnkX, leading to displace GDP dissociation inhibitors (GDI). Both GDP-bound and GTP-bound forms can be phosphocholinated. Dephosphocholinated by L.pneumophila Lem3, restoring accessibility to L.pneumophila GTPase effector LepB. (Microbial infection) Glycosylated by S.typhimurium protein Ssek3: arginine GlcNAcylation prevents GTPase activity, thereby disrupting vesicular protein transport from the endoplasmic reticulum (ER) to the Golgi compartment.

It is found in the membrane. The protein localises to the cytoplasm. The enzyme catalyses GTP + H2O = GDP + phosphate + H(+). Protein transport. Probably involved in vesicular traffic. This chain is Putative Ras-related protein Rab-1C (RAB1C), found in Homo sapiens (Human).